Consider the following 966-residue polypeptide: Serine/threonine-protein phosphatase 6 regulatory subunit 2 (966 aa).

Position 289 is a phosphoserine (Ser-289). 2 stretches are compositionally biased toward basic and acidic residues: residues 408 to 424 and 669 to 687; these read TEAS…HENG and GPER…HRDA. Disordered regions lie at residues 408–436 and 657–707; these read TEAS…PAAS and GAPH…VEGD. Ser-771 and Ser-828 each carry phosphoserine. The interval 819 to 856 is disordered; it reads ASDSSSSGGSHSEDGDQKAASAMDAVSRGPGREAPPLP.

The protein belongs to the SAPS family. Protein phosphatase 6 (PP6) holoenzyme is proposed to be a heterotrimeric complex formed by the catalytic subunit, a SAPS domain-containing subunit (PP6R) and an ankyrin repeat-domain containing regulatory subunit (ARS). Interacts with PPP6C and NFKBIE. Interacts with ANKRD28. Ubiquitously expressed with strongest expression in the testis followed by liver, heart, kidney, brain and placenta.

The protein resides in the cytoplasm. In terms of biological role, regulatory subunit of protein phosphatase 6 (PP6). May function as a scaffolding PP6 subunit. Involved in the PP6-mediated dephosphorylation of NFKBIE opposing its degradation in response to TNF-alpha. This Homo sapiens (Human) protein is Serine/threonine-protein phosphatase 6 regulatory subunit 2 (PPP6R2).